Here is a 480-residue protein sequence, read N- to C-terminus: UDP-glucose 6-dehydrogenase 3 (480 aa).

Residues 8–13 (GAGYVG), aspartate 33, arginine 38, 86–90 (VNTPT), 127–128 (ST), and glutamate 161 each bind NAD(+). Substrate contacts are provided by residues 157-161 (EFLAE), 216-223 (KLAANAFL), and 256-269 (RIGP…VGFG). The active-site Nucleophile is cysteine 272. Position 272-275 (272-275 (CFQK)) interacts with NAD(+). 334-335 (FK) is a binding site for substrate. Arginine 342 provides a ligand contact to NAD(+). Arginine 447 is a binding site for substrate.

Belongs to the UDP-glucose/GDP-mannose dehydrogenase family.

The catalysed reaction is UDP-alpha-D-glucose + 2 NAD(+) + H2O = UDP-alpha-D-glucuronate + 2 NADH + 3 H(+). It functions in the pathway nucleotide-sugar biosynthesis; UDP-alpha-D-glucuronate biosynthesis; UDP-alpha-D-glucuronate from UDP-alpha-D-glucose: step 1/1. Inhibited by UDP-xylose. In terms of biological role, involved in the biosynthesis of UDP-glucuronic acid (UDP-GlcA), providing nucleotide sugars for cell-wall polymers. Required for the formation of cell wall ingrowths on the outer cell walls of nematode-induced syncytia. The sequence is that of UDP-glucose 6-dehydrogenase 3 (UGD3) from Arabidopsis thaliana (Mouse-ear cress).